Consider the following 62-residue polypeptide: Large ribosomal subunit protein bL33 (62 aa).

Belongs to the bacterial ribosomal protein bL33 family.

This Bacteroides fragilis (strain ATCC 25285 / DSM 2151 / CCUG 4856 / JCM 11019 / LMG 10263 / NCTC 9343 / Onslow / VPI 2553 / EN-2) protein is Large ribosomal subunit protein bL33.